Reading from the N-terminus, the 646-residue chain is Anoctamin-10 (646 aa).

The next 8 membrane-spanning stretches (helical) occupy residues leucine 210–isoleucine 230, aspartate 241–tryptophan 261, isoleucine 314–methionine 334, valine 357–tyrosine 377, valine 404–glutamine 424, phenylalanine 502–valine 522, leucine 557–serine 577, and isoleucine 592–valine 612.

It belongs to the anoctamin family.

Its subcellular location is the membrane. Functionally, does not exhibit calcium-activated chloride channel (CaCC) activity. Can inhibit the activity of ANO1. In Danio rerio (Zebrafish), this protein is Anoctamin-10 (ano10).